Here is a 100-residue protein sequence, read N- to C-terminus: Small ribosomal subunit protein uS14c (100 aa).

This sequence belongs to the universal ribosomal protein uS14 family. Part of the 30S ribosomal subunit.

It localises to the plastid. It is found in the chloroplast. Functionally, binds 16S rRNA, required for the assembly of 30S particles. In Illicium oligandrum (Star anise), this protein is Small ribosomal subunit protein uS14c.